Reading from the N-terminus, the 596-residue chain is Beta-glucuronidase (596 aa).

2 residues coordinate D-glucuronate: D168 and N412. The active-site Proton donor is E413. Positions 464, 470, 502, 547, and 566 each coordinate D-glucuronate. E502 functions as the Nucleophile in the catalytic mechanism. An N-K motif motif is present at residues 564–566 (NKK).

The protein belongs to the glycosyl hydrolase 2 family.

Its subcellular location is the cytoplasm. It catalyses the reaction a beta-D-glucuronoside + H2O = D-glucuronate + an alcohol. Displays beta-glucuronidase activity with the artificial substrate p-nitrophenyl-beta-D-glucuronide (PNPG). Is probably involved in the metabolism of oligosaccharides containing the 3-O-beta-D-glucopyranosyl-beta-D-glucuronide structure released from bacterial and plant acidic carbohydrates. The chain is Beta-glucuronidase from Paenibacillus borealis.